A 349-amino-acid polypeptide reads, in one-letter code: Aspartate carbamoyltransferase catalytic subunit (349 aa).

Positions 59 and 60 each coordinate carbamoyl phosphate. An L-aspartate-binding site is contributed by lysine 87. 3 residues coordinate carbamoyl phosphate: arginine 109, histidine 142, and glutamine 145. Residues arginine 182 and arginine 253 each contribute to the L-aspartate site. Carbamoyl phosphate contacts are provided by glycine 294 and proline 295.

The protein belongs to the aspartate/ornithine carbamoyltransferase superfamily. ATCase family. In terms of assembly, heterododecamer (2C3:3R2) of six catalytic PyrB chains organized as two trimers (C3), and six regulatory PyrI chains organized as three dimers (R2).

It carries out the reaction carbamoyl phosphate + L-aspartate = N-carbamoyl-L-aspartate + phosphate + H(+). The protein operates within pyrimidine metabolism; UMP biosynthesis via de novo pathway; (S)-dihydroorotate from bicarbonate: step 2/3. Functionally, catalyzes the condensation of carbamoyl phosphate and aspartate to form carbamoyl aspartate and inorganic phosphate, the committed step in the de novo pyrimidine nucleotide biosynthesis pathway. The protein is Aspartate carbamoyltransferase catalytic subunit of Synechococcus sp. (strain CC9902).